The primary structure comprises 149 residues: Large ribosomal subunit protein bL9 (149 aa).

Belongs to the bacterial ribosomal protein bL9 family.

Its function is as follows. Binds to the 23S rRNA. This is Large ribosomal subunit protein bL9 from Alkaliphilus metalliredigens (strain QYMF).